A 130-amino-acid polypeptide reads, in one-letter code: Small ribosomal subunit protein uS9 (130 aa).

The interval 105 to 130 (TRDSRMKERKKPGLRGARRAPQFSKR) is disordered. Over residues 111 to 130 (KERKKPGLRGARRAPQFSKR) the composition is skewed to basic residues.

It belongs to the universal ribosomal protein uS9 family.

The sequence is that of Small ribosomal subunit protein uS9 from Lysinibacillus sphaericus (strain C3-41).